The sequence spans 421 residues: ATP-dependent RNA helicase RhlB (421 aa).

Positions 9–37 (QKFSDFALHPQVVEALEKKGFYNCTPIQA) match the Q motif motif. In terms of domain architecture, Helicase ATP-binding spans 40-219 (LPLTLAGRDV…FEQMNNAEYV (180 aa)). 53-60 (AQTGTGKT) lines the ATP pocket. The DEAD box signature appears at 165 to 168 (DEAD). The 146-residue stretch at 245 to 390 (RLLQTLIEEE…VSKYNPEALM (146 aa)) folds into the Helicase C-terminal domain. A disordered region spans residues 396–421 (PLRLTRSRPGNGPRRAGAPRNRRRSG). Positions 402 to 414 (SRPGNGPRRAGAP) are enriched in low complexity.

Belongs to the DEAD box helicase family. RhlB subfamily. As to quaternary structure, component of the RNA degradosome, which is a multiprotein complex involved in RNA processing and mRNA degradation.

The protein resides in the cytoplasm. It catalyses the reaction ATP + H2O = ADP + phosphate + H(+). Functionally, DEAD-box RNA helicase involved in RNA degradation. Has RNA-dependent ATPase activity and unwinds double-stranded RNA. In Salmonella arizonae (strain ATCC BAA-731 / CDC346-86 / RSK2980), this protein is ATP-dependent RNA helicase RhlB.